The sequence spans 204 residues: Large ribosomal subunit protein bL25 (204 aa).

The protein belongs to the bacterial ribosomal protein bL25 family. CTC subfamily. Part of the 50S ribosomal subunit; part of the 5S rRNA/L5/L18/L25 subcomplex. Contacts the 5S rRNA. Binds to the 5S rRNA independently of L5 and L18.

This is one of the proteins that binds to the 5S RNA in the ribosome where it forms part of the central protuberance. The chain is Large ribosomal subunit protein bL25 from Pseudomonas paraeruginosa (strain DSM 24068 / PA7) (Pseudomonas aeruginosa (strain PA7)).